An 84-amino-acid chain; its full sequence is MSVNLINIGFGNIVAGNRVIAVVSPESAPIKRIIQEARERGMLIDATYGRRTRAVIITDSDHVILSAIQPETVSHRLSGEDGNR.

It belongs to the RemA family.

This Halothermothrix orenii (strain H 168 / OCM 544 / DSM 9562) protein is Putative regulatory protein Hore_09800.